Here is a 179-residue protein sequence, read N- to C-terminus: Large ribosomal subunit protein uL5 (179 aa).

It belongs to the universal ribosomal protein uL5 family. Part of the 50S ribosomal subunit; part of the 5S rRNA/L5/L18/L25 subcomplex. Contacts the 5S rRNA and the P site tRNA. Forms a bridge to the 30S subunit in the 70S ribosome.

Its function is as follows. This is one of the proteins that bind and probably mediate the attachment of the 5S RNA into the large ribosomal subunit, where it forms part of the central protuberance. In the 70S ribosome it contacts protein S13 of the 30S subunit (bridge B1b), connecting the 2 subunits; this bridge is implicated in subunit movement. Contacts the P site tRNA; the 5S rRNA and some of its associated proteins might help stabilize positioning of ribosome-bound tRNAs. The polypeptide is Large ribosomal subunit protein uL5 (Xylella fastidiosa (strain 9a5c)).